Reading from the N-terminus, the 43-residue chain is Delta/kappa-actitoxin-Avd4a (43 aa).

3 disulfides stabilise this stretch: cysteine 4/cysteine 39, cysteine 6/cysteine 32, and cysteine 22/cysteine 40.

This sequence belongs to the sea anemone type 3 (BDS) potassium channel toxin family.

It is found in the secreted. It localises to the nematocyst. Its function is as follows. Acts as a gating modifier on both Kv and Nav ion channels, and also acts on blood pressure. Voltage-dependently inhibits voltage-gated potassium channels Kv3 (Kv3.1/KCNC1, Kv3.2/KCNC2 and Kv3.4/KCNC4) and slows inactivation of the voltage-gated sodium channel Nav1.7/SCN9A. Inhibits all Kv3.1, Kv3.2 and Kv3.4 by about 50% when tested at a voltage of +40 mV (45%, 48% and 56%, respectively). May act by binding residues in voltage-sensing domains S3b and S4 of Kv3. On sodium channel, tests have been done on human Nav1.7/SCN9A (expressed in HEK293 cells) (EC(50)=3 nM) and rat SCG neurons that mostly carry Nav1.7 channels (EC(50)=300 nM). This toxin also reduces blood pressure. This chain is Delta/kappa-actitoxin-Avd4a, found in Anemonia sulcata (Mediterranean snakelocks sea anemone).